The chain runs to 937 residues: Protein translocase subunit SecA (937 aa).

Residues Gln-86, 104–108 (GEGKT), and Asp-493 each bind ATP. The disordered stretch occupies residues 868-889 (LERPSQPTKLAYSAPSEDGDAE). Zn(2+) is bound by residues Cys-911, Cys-913, Cys-922, and His-923. The disordered stretch occupies residues 915-937 (SGKKFKQCHGRPGGPTGLTARVS).

Belongs to the SecA family. As to quaternary structure, monomer and homodimer. Part of the essential Sec protein translocation apparatus which comprises SecA, SecYEG and auxiliary proteins SecDF. Other proteins may also be involved. Requires Zn(2+) as cofactor.

The protein resides in the cell membrane. Its subcellular location is the cytoplasm. It carries out the reaction ATP + H2O + cellular proteinSide 1 = ADP + phosphate + cellular proteinSide 2.. Its function is as follows. Part of the Sec protein translocase complex. Interacts with the SecYEG preprotein conducting channel. Has a central role in coupling the hydrolysis of ATP to the transfer of proteins into and across the cell membrane, serving as an ATP-driven molecular motor driving the stepwise translocation of polypeptide chains across the membrane. The polypeptide is Protein translocase subunit SecA (Nocardioides sp. (strain ATCC BAA-499 / JS614)).